We begin with the raw amino-acid sequence, 298 residues long: Lipoyl synthase (298 aa).

[4Fe-4S] cluster-binding residues include C40, C45, C51, C67, C71, C74, and S280. Residues 53–269 (AVRRTATFMI…KEIALSKGFT (217 aa)) form the Radical SAM core domain.

This sequence belongs to the radical SAM superfamily. Lipoyl synthase family. Requires [4Fe-4S] cluster as cofactor.

Its subcellular location is the cytoplasm. It catalyses the reaction [[Fe-S] cluster scaffold protein carrying a second [4Fe-4S](2+) cluster] + N(6)-octanoyl-L-lysyl-[protein] + 2 oxidized [2Fe-2S]-[ferredoxin] + 2 S-adenosyl-L-methionine + 4 H(+) = [[Fe-S] cluster scaffold protein] + N(6)-[(R)-dihydrolipoyl]-L-lysyl-[protein] + 4 Fe(3+) + 2 hydrogen sulfide + 2 5'-deoxyadenosine + 2 L-methionine + 2 reduced [2Fe-2S]-[ferredoxin]. The protein operates within protein modification; protein lipoylation via endogenous pathway; protein N(6)-(lipoyl)lysine from octanoyl-[acyl-carrier-protein]. Catalyzes the radical-mediated insertion of two sulfur atoms into the C-6 and C-8 positions of the octanoyl moiety bound to the lipoyl domains of lipoate-dependent enzymes, thereby converting the octanoylated domains into lipoylated derivatives. In Geobacillus sp. (strain WCH70), this protein is Lipoyl synthase.